The primary structure comprises 892 residues: DNA mismatch repair protein MutS (892 aa).

Residue 607 to 614 coordinates ATP; it reads GPNMSGKS. The disordered stretch occupies residues 826–854; that stretch reads ETKAETEEESQLSFFGGEQSSKKQDKPVL. The segment covering 845 to 854 has biased composition (basic and acidic residues); sequence SSKKQDKPVL.

The protein belongs to the DNA mismatch repair MutS family.

Functionally, this protein is involved in the repair of mismatches in DNA. It is possible that it carries out the mismatch recognition step. This protein has a weak ATPase activity. The protein is DNA mismatch repair protein MutS of Bacillus cereus (strain AH187).